The sequence spans 184 residues: Putative axial regulator YABBY 2 (184 aa).

A C4-type zinc finger spans residues 15–42 (CSFCTTILAVSVPYASLFTLVTVRCGHC). Composition is skewed to polar residues over residues 76-94 (LVTRKDCASSSRSTNNLSE) and 171-184 (LDQSVAGQKSNGYY). Disordered stretches follow at residues 76–115 (LVTRKDCASSSRSTNNLSENIDREAPRMPPIRPPEKRQRV) and 162–184 (LDGNKKGKQLDQSVAGQKSNGYY).

It belongs to the YABBY family. Interacts with SPL/NZZ and SPEAR2. In terms of tissue distribution, expressed at low levels in abaxial regions of lateral aerial organ primordia leading to cotyledons, leaves, flower meristems, sepals, petals, stamen and carpels, but not in roots.

It localises to the nucleus. In terms of biological role, involved in the abaxial cell fate determination during embryogenesis and organogenesis. The protein is Putative axial regulator YABBY 2 (YAB2) of Arabidopsis thaliana (Mouse-ear cress).